The following is a 124-amino-acid chain: Large ribosomal subunit protein bL12 (124 aa).

Residues 101–115 are compositionally biased toward basic and acidic residues; it reads ALSKDDAEKAKKELE. Residues 101–124 form a disordered region; the sequence is ALSKDDAEKAKKELEEAGATVELK.

Belongs to the bacterial ribosomal protein bL12 family. Homodimer. Part of the ribosomal stalk of the 50S ribosomal subunit. Forms a multimeric L10(L12)X complex, where L10 forms an elongated spine to which 2 to 4 L12 dimers bind in a sequential fashion. Binds GTP-bound translation factors.

In terms of biological role, forms part of the ribosomal stalk which helps the ribosome interact with GTP-bound translation factors. Is thus essential for accurate translation. This chain is Large ribosomal subunit protein bL12, found in Hahella chejuensis (strain KCTC 2396).